We begin with the raw amino-acid sequence, 860 residues long: Probable beta-glucosidase A (860 aa).

An N-terminal signal peptide occupies residues 1–19 (MRFTSIEAVALTAVSLASA). 3 N-linked (GlcNAc...) asparagine glycosylation sites follow: N61, N211, and N252. D280 is a catalytic residue. N-linked (GlcNAc...) asparagine glycans are attached at residues N315, N322, N354, N387, N442, N523, N542, N564, N658, N690, and N712.

Belongs to the glycosyl hydrolase 3 family.

It localises to the secreted. The enzyme catalyses Hydrolysis of terminal, non-reducing beta-D-glucosyl residues with release of beta-D-glucose.. It participates in glycan metabolism; cellulose degradation. In terms of biological role, beta-glucosidases are one of a number of cellulolytic enzymes involved in the degradation of cellulosic biomass. Catalyzes the last step releasing glucose from the inhibitory cellobiose. The chain is Probable beta-glucosidase A (bglA) from Aspergillus niger (strain ATCC MYA-4892 / CBS 513.88 / FGSC A1513).